The primary structure comprises 432 residues: uncharacterized protein (432 aa).

2 SIS domains span residues 105–244 (WLTE…DLVS) and 277–422 (CDKK…VDLP).

This is an uncharacterized protein from Saccharomyces cerevisiae (strain ATCC 204508 / S288c) (Baker's yeast).